We begin with the raw amino-acid sequence, 202 residues long: uncharacterized protein (202 aa).

The signal sequence occupies residues 1–18 (MKNRLLILSLLVSVPAFA).

This sequence to E.coli YebB.

This is an uncharacterized protein from Escherichia coli (strain K12).